A 467-amino-acid chain; its full sequence is Cytochrome P450 76A1 (467 aa).

Cysteine 410 contributes to the heme binding site.

This sequence belongs to the cytochrome P450 family. Heme serves as cofactor.

The sequence is that of Cytochrome P450 76A1 (CYP76A1) from Solanum melongena (Eggplant).